Reading from the N-terminus, the 359-residue chain is Peptide chain release factor 1 (359 aa).

Gln235 carries the post-translational modification N5-methylglutamine. Residues 283 to 309 (QKAESERSQARRSQVGSGDRSERIRTY) are disordered.

The protein belongs to the prokaryotic/mitochondrial release factor family. Methylated by PrmC. Methylation increases the termination efficiency of RF1.

The protein resides in the cytoplasm. Peptide chain release factor 1 directs the termination of translation in response to the peptide chain termination codons UAG and UAA. The chain is Peptide chain release factor 1 from Brucella abortus (strain S19).